The chain runs to 263 residues: Inactive adenylate kinase (263 aa).

This sequence belongs to the adenylate kinase family.

Its subcellular location is the cytoplasm. In terms of biological role, lacks adenylate kinase activity. The polypeptide is Inactive adenylate kinase (Plasmodium falciparum (isolate 3D7)).